The primary structure comprises 640 residues: MTIPCSRPLFIEPFDLYLFGMGRHRHLYRILGAHPAVQDGEAGYRFAVWAPNARSVHLSGDCNGWRHEGCPLFPVGVSGVWAAFVPGVRRGSLYKFVVRGADGRQEQKADPFALWAEMRPGVASVAWDIDNHAWGDGAWMAERARQGLPLERPVSIYEVHLGSWRRRHGDGHPFLTYDELGDQLIPYATGLGFTHLELLPVAEHPLDQSWGYQTGHYYAPTSRFGSPEGFKRFVDRCHQAGLGVILDWVPAHFPRDAWSLGRFDGTALYEHLDPRLGEHPDWGTYIFNYGRNEVRNFLTANALYWLREFHIDGLRMDAVASMLYLDYSREAGQWLPNRHGGRENLDAVDFLREVNTVIHAEFPGAMTLAEESTAWPGVSRPVYTGGLGFSFKWNMGWMHDTLGYLAEDPIHRAYHHGSLTFSMLYAFSENFVLPLSHDEVVHGKGALLSKMPGDMWQQQANLRLLYAYQWAHPGKKLLFMGGEFGQWNEWDESRELDWCLYRFPAHEGIARLVGDLNRLLRSEPAMHRRDHDWSGFRWVDFADYGSSVISFLRLAAGERPLLWIFNFTPVVRRFYRVPCPRGGTWRELCNTDSAYYGGSDVGNAGAVMAREDHWGGGHFIELTLPPLAAMCFAPVTGQGT.

Asp317 (nucleophile) is an active-site residue. Residue Glu370 is the Proton donor of the active site.

This sequence belongs to the glycosyl hydrolase 13 family. GlgB subfamily. As to quaternary structure, monomer.

It catalyses the reaction Transfers a segment of a (1-&gt;4)-alpha-D-glucan chain to a primary hydroxy group in a similar glucan chain.. The protein operates within glycan biosynthesis; glycogen biosynthesis. In terms of biological role, catalyzes the formation of the alpha-1,6-glucosidic linkages in glycogen by scission of a 1,4-alpha-linked oligosaccharide from growing alpha-1,4-glucan chains and the subsequent attachment of the oligosaccharide to the alpha-1,6 position. The polypeptide is 1,4-alpha-glucan branching enzyme GlgB (Nitratidesulfovibrio vulgaris (strain ATCC 29579 / DSM 644 / CCUG 34227 / NCIMB 8303 / VKM B-1760 / Hildenborough) (Desulfovibrio vulgaris)).